The sequence spans 344 residues: L-rhamnose-proton symporter (344 aa).

A run of 10 helical transmembrane segments spans residues 4-24 (AITM…CFYA), 38-58 (WSVG…ALLL), 68-88 (FNLS…IGNI), 101-121 (MGIG…TPII), 137-157 (TLLG…AGQL), 175-195 (LLLA…MNAA), 214-234 (LPSY…FCFI), 259-279 (ILLS…YAWG), 290-310 (MSWM…GLVL), and 321-341 (VAVL…VGLG).

The protein belongs to the L-rhamnose transporter (TC 2.A.7.6) family.

The protein localises to the cell inner membrane. The enzyme catalyses L-rhamnopyranose(in) + H(+)(in) = L-rhamnopyranose(out) + H(+)(out). In terms of biological role, uptake of L-rhamnose across the cytoplasmic membrane with the concomitant transport of protons into the cell (symport system). This is L-rhamnose-proton symporter from Salmonella dublin (strain CT_02021853).